A 418-amino-acid polypeptide reads, in one-letter code: Ankyrin repeat and SOCS box protein 6 (418 aa).

6 ANK repeats span residues 65–95 (EGVS…NLNF), 100–129 (TYYT…DINR), 134–164 (HESS…DVNA), 168–203 (NGKT…DVKA), 224–253 (CGDK…DPSE), and 258–287 (ESLT…AYNC). The SOCS box domain maps to 358-413 (ALHASLRQLESYPPPLKHLCRVSIRLCLRPWPVDTKVKALPLPDRLKWYLLSAHSD).

This sequence belongs to the ankyrin SOCS box (ASB) family. Binds APS. Identified in a complex with ELOB and ELOC. Interacts with CUL5 and RNF7. Interacts with SQSTM1. As to expression, detected in adipocytes.

Its subcellular location is the cytoplasm. Its pathway is protein modification; protein ubiquitination. In terms of biological role, probable substrate-recognition component of a SCF-like ECS (Elongin-Cullin-SOCS-box protein) E3 ubiquitin-protein ligase complex which mediates the ubiquitination and subsequent proteasomal degradation of target proteins. May play a role in the regulation of cell proliferation and autophagy by promoting the ubiquitination and degradation of SQSTM1. This chain is Ankyrin repeat and SOCS box protein 6 (Asb6), found in Mus musculus (Mouse).